Consider the following 1342-residue polypeptide: DNA-directed RNA polymerase subunit beta (1342 aa).

N6-acetyllysine is present on residues Lys-1022 and Lys-1200.

This sequence belongs to the RNA polymerase beta chain family. As to quaternary structure, the RNAP catalytic core consists of 2 alpha, 1 beta, 1 beta' and 1 omega subunit. When a sigma factor is associated with the core the holoenzyme is formed, which can initiate transcription.

It catalyses the reaction RNA(n) + a ribonucleoside 5'-triphosphate = RNA(n+1) + diphosphate. Functionally, DNA-dependent RNA polymerase catalyzes the transcription of DNA into RNA using the four ribonucleoside triphosphates as substrates. This Shigella dysenteriae serotype 1 (strain Sd197) protein is DNA-directed RNA polymerase subunit beta.